A 1218-amino-acid polypeptide reads, in one-letter code: Probable cation-transporting ATPase 13A5 (1218 aa).

4 consecutive transmembrane segments (helical) span residues 33 to 53 (KAFCLVASVLTCGGLLLVFYW), 222 to 242 (GYIEYSVAIIILTVISIVLSV), 401 to 421 (FIVFLACLGVMGFFYALGVYM), and 433 to 453 (MALILLTVTVPPVLPAALTIG). D486 (4-aspartylphosphate intermediate) is an active-site residue. N-linked (GlcNAc...) asparagine glycans are attached at residues N540, N669, and N819. 2 residues coordinate Mg(2+): D850 and D854. 6 helical membrane passes run 903–923 (FGVFKYLTMYGIIQFISALLL), 940–956 (VAITLMVCLTMSSTHAY), 973–993 (LLLSIFLNSCFSCIVQISAFL), 1042–1062 (FETTTLWPITTINYITVAFIF), 1077–1097 (IFSFLLLAALGLTIFILFSDF), and 1115–1135 (VLILVVALTQFCVAFFVEDSI).

The protein belongs to the cation transport ATPase (P-type) (TC 3.A.3) family. Type V subfamily.

It is found in the membrane. It carries out the reaction ATP + H2O = ADP + phosphate + H(+). The polypeptide is Probable cation-transporting ATPase 13A5 (ATP13A5) (Homo sapiens (Human)).